The primary structure comprises 193 residues: Ribose 1,5-bisphosphate phosphokinase PhnN (193 aa).

Gly9–Asp16 contacts ATP.

This sequence belongs to the ribose 1,5-bisphosphokinase family.

It catalyses the reaction alpha-D-ribose 1,5-bisphosphate + ATP = 5-phospho-alpha-D-ribose 1-diphosphate + ADP. Its pathway is metabolic intermediate biosynthesis; 5-phospho-alpha-D-ribose 1-diphosphate biosynthesis; 5-phospho-alpha-D-ribose 1-diphosphate from D-ribose 5-phosphate (route II): step 3/3. In terms of biological role, catalyzes the phosphorylation of ribose 1,5-bisphosphate to 5-phospho-D-ribosyl alpha-1-diphosphate (PRPP). The chain is Ribose 1,5-bisphosphate phosphokinase PhnN from Yersinia pestis.